The sequence spans 376 residues: T-box transcription factor 18 (376 aa).

Over residues 38-63 (STSRPSSSSPPSLPAVSSELLSSSFP) the composition is skewed to low complexity. Residues 38 to 76 (STSRPSSSSPPSLPAVSSELLSSSFPTNAPESSSRDLAP) are disordered. The T-box DNA-binding region spans 171 to 364 (LANQEQWAKF…GNKYCRTDRK (194 aa)).

The protein localises to the nucleus. Functionally, transcriptional regulator involved in developmental processes. Directly binds to the promoter region of the sex-determining factor xol-1 to activate its transcription. Its activation of xol-1 transcription controls sex determination and X chromosome dosage compensation to promote male development. Has a role in the fox-1-sex-1-mediated determination of sexual fate. The polypeptide is T-box transcription factor 18 (Caenorhabditis elegans).